Consider the following 38-residue polypeptide: Zinc-containing ferredoxin (38 aa).

Residues 1–11 (GIDPNFRTSRP) are compositionally biased toward polar residues. The segment at 1–38 (GIDPNFRTSRPVTGDHAGHKVYAPADPPVKEKALGIHG) is disordered. Residues 1 to 38 (GIDPNFRTSRPVTGDHAGHKVYAPADPPVKEKALGIHG) are N-terminal extension. Residues histidine 16 and histidine 19 each contribute to the Zn(2+) site. Residues 28–38 (PVKEKALGIHG) are compositionally biased toward basic and acidic residues. Position 30 is an N6-methyllysine (lysine 30). A Zn(2+)-binding site is contributed by histidine 37.

[3Fe-4S] cluster is required as a cofactor. Requires [4Fe-4S] cluster as cofactor. It depends on Zn(2+) as a cofactor.

Ferredoxins are iron-sulfur proteins that transfer electrons in a wide variety of metabolic reactions. This Metallosphaera prunae protein is Zinc-containing ferredoxin (zfx).